The sequence spans 2134 residues: MSKLFSTVGKTVDEVLSVLNDENTESYAGPDRTAVVGGGFLTTVDQSSVSTATMGSLQDVQYRTAVDIPGSRVTQGERFFLIDQREWNSTQSEWQLLGKIDIVKELLDQSYAVDGLLKYHSYARFGLDVIVQINPTSFQAGGLIAALVPYDQVDIESIAAMTTYCHGKLNCNINNVVRMKVPYIYSRGCYNLRNSAYSIWMLVIRVWSQLQLGSGTSTQITVTTLARFVDLELHGLSPLVAQMMRNEFRLSSSSNIVNLANYEDARAKVSLALGQEEFSRDSSSTGGELLHHFSQWTSIPCLAFTFTFPGTVGPGTQIWSTTVDPFSCNLRASSTVHPTNLSSIAGMFCFWRGDIVFEFQVFCTKYHSGRLMFVYVPGDENTKISTLTAKQASSGLTAVFDINGVNSTLVFRCPFISDTPYRVNPTTHKSLWPYATGKLVCYVYNRLNAPASVSPSVSINVYKSAVDLELYAPVYGVSPTNTSVFAQGKEDEGGFSSVPEVEQHVVEDKEPQGPLHVTPFGAVKAMEDPQLARKTPGTFPELAPGKPRHTVDHMDLYKFMGRAHYLWGHKFTKTDMQYTFQIPLSPIKEGFVTGTLRWFLSLFQLYRGSLDITMTFAGKTNVDGIVYFVPEGVAIETEREEQTPLLTLNYKTSVGAIRFNTGQTTNVQFRIPFYTPLEHIATHSKNAMDSVLGAITTQITNYSAQDEYLQVTYYISFNEDSQFSVPRAVPVVSSFTDTSSKTVMNTYWLDDDELVEESSHSSFDEIEEAQCSKCKMDLGDIVSCSGEKAKHFGVYVGDGVVHVDPEGNATNWFMKRKATVKKSKNLDKWCFALSPRIDRTLICETANLMVGREVEYDIFVKNCETYARGIASGDYGTKEGEKWKTLLSAVGVAAMTTTMMAMRHELLDTSLTKLPQKVGEVTNEVRKILEDTSAGVREFKEKVSSILRKTWPGKTSIKIMKWTCRIVKMCVGVGLCYAHGWDSKTVTAVVTMFSMDFLDLVIDGIEIGRMIIDELTTPKAQGLSEINQVLSIAKNAKDVIKMLIEIFCKVIERITGEHGKKIQWAQDKKEEIMNVLERAEKWITTSDDHSEGIECLKLVRSIQSVIRGEESLKELAGELRAVGTHVLNKLGRLDKPNAPILVRAEPTVLYLYGNRGGGKSLASMAIAVKLCKELGISHVEGIYTKPIMSDFWDGYAGQPVVIMDDLGQSTSDEDWTNFCQLVSSCPLRLNMANLEKKGTQFNSPFIIASSNLSHPCPKTVYCTDAIARRLHIKVKVSPKEEFSTHAMLDVAKAKKAGAYCNLDCLDFQKISDLASTPVSVQDIVLEMLHTNVDKQTLMGDIIQYWAQSNPREVFDTMAEGKNSGKYLWLFEKIKTSKWYILGCVGAVLSVSVLGVFAYHMIKNHFRDQQHDQSAYSAAIKPLRVVRLEQSDAQSVVDISNVVHGNLVRVGVGPNEARIHWLYNGLGVYDTYILMPYHGIKDADVDDDLYIERAGTIYSTNMKMVQVLFLESREGDLVLINVPRLPKFRDIRNHFSTEENIRRAEGMPGTLCTLDHERFTLVTESDLKMVEAATYVCEDDKGVRTDISVGRSWKAKACTVAGMCGGALVTSNNKMQNAIVGIHVAGGAHAISRVITKEMIEEMLKTRAQCSRIWKTEFVEEKISVGSKTKYHKSPLYDFCPQEVIKCPTKLFYQGEIDVMQVMLAKYSSPIVSEPLGYATVVEAYTNRMVSFFSEPRQLTYDECINGIEGLDAIDLKTSAGFPYNTLGLRKSDLIINGKMAQRLQQDVEKMEEDLHMNRSIQVVFTTCAKDELRPLSKVMLGKTRAIEACPVSFTILFRRYLGYALAQIQSHPGFHTGIAVGVDPDQDWHCMWYSIVTQCDLVVGLDFSNYDASLSPFMIYHAGRVLGQICGLDPRLVDRIMEPIVNSVHQLGSMRYYVHGSMPSGTPATSVLNSIINVVNICHVLCALEKISVFEVFKLFKILTYGDDVLLCIKKEYLDQKSFPLSSFVQGLEELGLSPTGADKMEVKVTPVHKMSFLKRTFYVDEWSICHPRISEETVYSMLAWKSDNASMKDLIETSIWFMFHHGPRKYVRFCTWLRGVLCRVGIGLYIPTYKELEVRYDRLVKYRFIDDSF.

Residues 1–1377 are Cytoplasmic-facing; sequence MSKLFSTVGK…WLFEKIKTSK (1377 aa). In terms of domain architecture, LRAT spans 781–882; it reads IVSCSGEKAK…GDYGTKEGEK (102 aa). Active-site residues include H791 and H802. Residue C863 is the Acyl-thioester intermediate of the active site. One can recognise an SF3 helicase domain in the interval 1127–1289; the sequence is LNKLGRLDKP…EEFSTHAMLD (163 aa). Position 1153 to 1160 (1153 to 1160) interacts with ATP; sequence GNRGGGKS. Residues 1378–1392 lie within the membrane without spanning it; sequence WYILGCVGAVLSVSV. Residues 1393–2134 are Cytoplasmic-facing; the sequence is LGVFAYHMIK…VKYRFIDDSF (742 aa). Y1415 bears the O-(5'-phospho-RNA)-tyrosine mark. Residues 1431-1643 enclose the Peptidase C3 domain; the sequence is DAQSVVDISN…ITKEMIEEML (213 aa). Catalysis depends on for protease 3C activity residues H1477, D1515, and C1603. Residues 1880–2001 form the RdRp catalytic domain; the sequence is DLVVGLDFSN…CIKKEYLDQK (122 aa).

The protein belongs to the picornaviridae polyprotein family. Post-translationally, specific enzymatic cleavages by the viral protease in vivo yield a variety of precursors and mature proteins. During virion maturation, non-infectious particles are rendered infectious following cleavage of VP0. This maturation cleavage is followed by a conformational change of the particle. VPg is uridylylated by the polymerase and is covalently linked to the 5'-end of genomic RNA. This uridylylated form acts as a nucleotide-peptide primer for the polymerase.

The protein resides in the virion. The protein localises to the host cytoplasm. It is found in the host cytoplasmic vesicle membrane. The enzyme catalyses RNA(n) + a ribonucleoside 5'-triphosphate = RNA(n+1) + diphosphate. The catalysed reaction is a ribonucleoside 5'-triphosphate + H2O = a ribonucleoside 5'-diphosphate + phosphate + H(+). It carries out the reaction Selective cleavage of Gln-|-Gly bond in the poliovirus polyprotein. In other picornavirus reactions Glu may be substituted for Gln, and Ser or Thr for Gly.. In terms of biological role, capsid proteins VP1, VP2, and VP3 form a closed capsid enclosing the viral positive strand RNA genome. All these proteins contain a beta-sheet structure called beta-barrel jelly roll. Together they form an icosahedral capsid (T=3) composed of 60 copies of each VP1, VP2, and VP3, with a diameter of approximately 300 Angstroms. VP1 is situated at the 12 fivefold axes, whereas VP2 and VP3 are located at the quasi-sixfold axes. Its function is as follows. VP0 precursor is a component of immature procapsids. The N-terminal domain of VP0, protein VP4, is needed for the assembly of 12 pentamers into the icosahedral structure. Unlike other picornaviruses, AEV VP4 may not be myristoylated. Protein 2B and 2BC precursor affect membrane integrity and cause an increase in membrane permeability. Functionally, associates with and induces structural rearrangements of intracellular membranes. It displays RNA-binding, nucleotide binding and NTPase activities. In terms of biological role, protein 3A, via its hydrophobic domain, serves as membrane anchor. Its function is as follows. Protein 3B is covalently linked to the 5'-end of both the positive-strand and negative-strand genomic RNAs. It acts as a genome-linked replication primer. Cysteine protease that generates mature viral proteins from the precursor polyprotein. In addition to its proteolytic activity, it binds to viral RNA, and thus influences viral genome replication. RNA and substrate bind cooperatively to the protease. Functionally, RNA-directed RNA polymerase 3D-POL replicates genomic and antigenomic RNA by recognizing replications specific signals. The chain is Genome polyprotein from Avian encephalomyelitis virus (strain Calnek vaccine) (AEV).